The chain runs to 150 residues: Ribonuclease K6 (150 aa).

Residues Met-1 to Ala-23 form the signal peptide. The active-site Proton acceptor is His-38. Disulfide bonds link Cys-46/Cys-104, Cys-60/Cys-114, Cys-78/Cys-129, and Cys-85/Cys-92. The N-linked (GlcNAc...) asparagine glycan is linked to Asn-55. Substrate contacts are provided by residues Lys-61–Thr-65 and Lys-86. An N-linked (GlcNAc...) asparagine glycan is attached at Asn-100. Arg-105 is a binding site for substrate. Residue His-145 is the Proton donor of the active site.

Belongs to the pancreatic ribonuclease family. As to quaternary structure, interacts (via N-terminus) with bacterial lipopolysaccharide (LPS).

It is found in the secreted. The protein resides in the lysosome. Its subcellular location is the cytoplasmic granule. Functionally, ribonuclease which shows a preference for the pyrimidines uridine and cytosine. Has potent antibacterial activity against a range of Gram-positive and Gram-negative bacteria, including P.aeruginosa, A.baumanii, M.luteus, S.aureus, E.faecalis, E.faecium, S.saprophyticus and E.coli. Causes loss of bacterial membrane integrity, and also promotes agglutination of Gram-negative bacteria. Probably contributes to urinary tract sterility. Bactericidal activity is independent of RNase activity. The polypeptide is Ribonuclease K6 (RNASE6) (Papio hamadryas (Hamadryas baboon)).